The primary structure comprises 189 residues: Probable nicotinate-nucleotide adenylyltransferase (189 aa).

Belongs to the NadD family.

The catalysed reaction is nicotinate beta-D-ribonucleotide + ATP + H(+) = deamido-NAD(+) + diphosphate. It functions in the pathway cofactor biosynthesis; NAD(+) biosynthesis; deamido-NAD(+) from nicotinate D-ribonucleotide: step 1/1. In terms of biological role, catalyzes the reversible adenylation of nicotinate mononucleotide (NaMN) to nicotinic acid adenine dinucleotide (NaAD). This chain is Probable nicotinate-nucleotide adenylyltransferase, found in Ruegeria sp. (strain TM1040) (Silicibacter sp.).